The primary structure comprises 74 residues: MSSKTLLVLLLVGVLVSTFFTADAYPASMDNYDDALEELDNLDLDDYFDLEPADFVLLDMWANMLESSDFDDME.

The first 24 residues, 1-24 (MSSKTLLVLLLVGVLVSTFFTADA), serve as a signal peptide directing secretion.

Belongs to the non-disulfide-bridged peptide (NDBP) superfamily. Long chain multifunctional peptide (group 2) family. As to expression, expressed by the venom gland.

Its subcellular location is the secreted. Its function is as follows. Highly acidic peptide that may have antibacterial activity. This is Peptide BmKa2 from Olivierus martensii (Manchurian scorpion).